Reading from the N-terminus, the 336-residue chain is Peroxidase 20 (336 aa).

An N-terminal signal peptide occupies residues 1–24; it reads MEIKQKKVWLSLIVLYAITTSVLG. Intrachain disulfides connect C39-C119, C72-C77, C125-C331, and C204-C239. The Proton acceptor role is filled by H70. Residues D71, V74, G76, D78, and S80 each contribute to the Ca(2+) site. P167 contributes to the substrate binding site. An N-linked (GlcNAc...) asparagine glycan is attached at N170. Residue H197 participates in heme b binding. T198 is a binding site for Ca(2+). Ca(2+)-binding residues include D252, T255, and D260.

It belongs to the peroxidase family. Classical plant (class III) peroxidase subfamily. Heme b serves as cofactor. It depends on Ca(2+) as a cofactor.

The protein resides in the secreted. The catalysed reaction is 2 a phenolic donor + H2O2 = 2 a phenolic radical donor + 2 H2O. Functionally, removal of H(2)O(2), oxidation of toxic reductants, biosynthesis and degradation of lignin, suberization, auxin catabolism, response to environmental stresses such as wounding, pathogen attack and oxidative stress. These functions might be dependent on each isozyme/isoform in each plant tissue. In terms of biological role, may be implicated in the systemic acquired resistance response via the salicylic acid signal transduction pathway. This is Peroxidase 20 (PER20) from Arabidopsis thaliana (Mouse-ear cress).